Here is a 292-residue protein sequence, read N- to C-terminus: MIAGSMVALVTPMDAQGRLDWGSLGKLVDFHLENGTHAIVAVGTTGESATLSVEEHIEVIEFVVKRVAGRIPVIAGTGANSTSEAVHLTQNAKDAGADACLLVVPYYNKPTQEGLYLHFKHIAEAVDIPQILYNVPGRTSCDMQAETVIRLSTVPNIIGIKEATGDLARAKAILDGVSKDFIVMSGDDPTAVELILLGGKGNISVTANVAPREMADLCEAALEGNAEKARAINEKLMPLHKDLFCEANPIPVKYALVEMGLMQKGIRLPLTWLSEGCHEKVRTALRQSGVLV.

Threonine 45 contacts pyruvate. Residue tyrosine 133 is the Proton donor/acceptor of the active site. Catalysis depends on lysine 161, which acts as the Schiff-base intermediate with substrate. Isoleucine 203 is a pyruvate binding site.

Belongs to the DapA family. In terms of assembly, homodimer.

It localises to the cytoplasm. The catalysed reaction is L-aspartate 4-semialdehyde + pyruvate = (2S,4S)-4-hydroxy-2,3,4,5-tetrahydrodipicolinate + H2O + H(+). It functions in the pathway amino-acid biosynthesis; L-lysine biosynthesis via DAP pathway; (S)-tetrahydrodipicolinate from L-aspartate: step 3/4. Its function is as follows. Catalyzes the condensation of (S)-aspartate-beta-semialdehyde [(S)-ASA] and pyruvate to 4-hydroxy-tetrahydrodipicolinate (HTPA). The protein is 4-hydroxy-tetrahydrodipicolinate synthase of Pseudomonas putida (strain W619).